Reading from the N-terminus, the 94-residue chain is Integration host factor subunit beta (94 aa).

It belongs to the bacterial histone-like protein family. As to quaternary structure, heterodimer of an alpha and a beta chain.

Functionally, this protein is one of the two subunits of integration host factor, a specific DNA-binding protein that functions in genetic recombination as well as in transcriptional and translational control. In Escherichia fergusonii (strain ATCC 35469 / DSM 13698 / CCUG 18766 / IAM 14443 / JCM 21226 / LMG 7866 / NBRC 102419 / NCTC 12128 / CDC 0568-73), this protein is Integration host factor subunit beta.